Consider the following 201-residue polypeptide: Large ribosomal subunit protein bL25 (201 aa).

It belongs to the bacterial ribosomal protein bL25 family. CTC subfamily. In terms of assembly, part of the 50S ribosomal subunit; part of the 5S rRNA/L5/L18/L25 subcomplex. Contacts the 5S rRNA. Binds to the 5S rRNA independently of L5 and L18.

Functionally, this is one of the proteins that binds to the 5S RNA in the ribosome where it forms part of the central protuberance. The protein is Large ribosomal subunit protein bL25 of Akkermansia muciniphila (strain ATCC BAA-835 / DSM 22959 / JCM 33894 / BCRC 81048 / CCUG 64013 / CIP 107961 / Muc).